The following is a 175-amino-acid chain: uncharacterized protein (175 aa).

5 helical membrane passes run 25 to 45 (MIAI…TTIS), 46 to 66 (ATGP…FFLL), 97 to 117 (FAGW…LTAV), 124 to 144 (WLPG…LTLL), and 155 to 175 (TEFW…VTGI).

It belongs to the amino acid-polyamine-organocation (APC) superfamily.

Its subcellular location is the cell membrane. This is an uncharacterized protein from Lactobacillus delbrueckii subsp. lactis.